Here is a 624-residue protein sequence, read N- to C-terminus: Adhesion and hyphal regulator 1 (624 aa).

The zn(2)-C6 fungal-type DNA-binding region spans 19 to 46; it reads CVTCRDRHIKCDEQQPVCKNCQKSNRKC. Disordered stretches follow at residues 63–84 and 230–250; these read DDNK…YAFP and PQHH…TDPN. Residues 237–250 show a composition bias toward polar residues; the sequence is DTSQHQETTSTDPN.

As to quaternary structure, interacts with MCM1.

The protein localises to the nucleus. Transcription factor that binds the promoters of genes involved in biofilm formation, which include several key adhesion genes, and recruits MCM1 to these sites. Plays an important role in hyphal growth and virulence. Promotes conversion of opaque cells to white phase, but needs existence of EFG1, a key regulator required for maintenance of the white state. The chain is Adhesion and hyphal regulator 1 (AHR1) from Candida albicans (strain SC5314 / ATCC MYA-2876) (Yeast).